A 340-amino-acid chain; its full sequence is MYG1 protein C27H6.8 (340 aa).

This sequence belongs to the MYG1 family.

This is MYG1 protein C27H6.8 from Caenorhabditis elegans.